The following is a 393-amino-acid chain: Protein TsgA (393 aa).

Transmembrane regions (helical) follow at residues 11–31 (WISF…GMVM), 51–71 (FLNA…EIVP), 78–98 (FGFL…SLAL), 101–121 (AAMF…TFLI), 134–154 (LLFT…IAAF), 162–182 (WYWV…LTFG), 206–226 (IGVL…LGFI), 245–265 (TLVS…SFIL), 273–293 (ILTV…TGTP), 297–317 (AWSI…IITL), 332–352 (FVLT…GPIV), and 361–381 (LLTA…LGFV).

This sequence belongs to the major facilitator superfamily. TsgA family.

The protein localises to the cell inner membrane. The protein is Protein TsgA of Escherichia coli O7:K1 (strain IAI39 / ExPEC).